We begin with the raw amino-acid sequence, 149 residues long: Inner membrane protein YfeZ (149 aa).

Topologically, residues 1-18 (MKSTEFHPVHYDAHGRLR) are cytoplasmic. The helical transmembrane segment at 19-39 (LPLLFWLVLLLQARTWVLFVI) threads the bilayer. Over 40 to 58 (AGASREQGTALLNLFYPDH) the chain is Periplasmic. The helical transmembrane segment at 59–79 (DNFWLGLIPGIPAVLAFLLSG) threads the bilayer. The Cytoplasmic segment spans residues 80-89 (RRATFPRTWR). Residues 90–110 (VLYFLLLLAQVVLLCWQPWLW) form a helical membrane-spanning segment. The Periplasmic portion of the chain corresponds to 111 to 115 (LNGES). Residues 116–136 (VSGIGLALVVADIVALIWLLT) traverse the membrane as a helical segment. Topologically, residues 137-149 (NRRLRACFYEVKE) are cytoplasmic.

The protein localises to the cell inner membrane. The sequence is that of Inner membrane protein YfeZ (yfeZ) from Escherichia coli (strain K12).